A 337-amino-acid polypeptide reads, in one-letter code: Transmembrane protein 120B (337 aa).

Positions 1–39 (MSLERCQSEWTEIEQEYQQLQETHKVYRQKLEELTNLQA) form a coiled coil. A run of 6 helical transmembrane segments spans residues 100-122 (GLYL…AKFA), 130-150 (FKLY…FLLN), 157-175 (IFNF…RESI), 185-205 (GWWV…LTWP), 268-288 (FLLP…VTLF), and 300-320 (QVFM…LTTL).

The protein belongs to the TMEM120 family.

The protein resides in the nucleus inner membrane. Necessary for efficient adipogenesis. Does not show ion channel activity. The polypeptide is Transmembrane protein 120B (tmem120b) (Danio rerio (Zebrafish)).